We begin with the raw amino-acid sequence, 77 residues long: Large ribosomal subunit protein eL13 (77 aa).

It belongs to the eukaryotic ribosomal protein eL13 family.

In Sulfurisphaera tokodaii (strain DSM 16993 / JCM 10545 / NBRC 100140 / 7) (Sulfolobus tokodaii), this protein is Large ribosomal subunit protein eL13.